Consider the following 557-residue polypeptide: Probable WRKY transcription factor 20 (557 aa).

Basic and acidic residues predominate over residues 1 to 12 (MNPQANDRKEFQ). Disordered regions lie at residues 1–36 (MNPQANDRKEFQGDCSATGDLTAKHDSAGGNGGGGA) and 76–215 (KPEP…DGYN). A compositionally biased stretch (polar residues) spans 95–114 (SASSSSYTGRGFHQNTFTEQ). Residues 151 to 169 (SSHSPSSISDAAGSSSELS) are compositionally biased toward low complexity. Residues 193 to 207 (SIQTSQNDSRGSTPS) are compositionally biased toward polar residues. The WRKY 1 DNA-binding region spans 205–269 (TPSILADDGY…YKGTHDHPKP (65 aa)). Zn(2+)-binding residues include cysteine 236, cysteine 241, histidine 264, and histidine 266. Positions 257–348 (DIIYKGTHDH…PDDDDPFSKR (92 aa)) are disordered. A compositionally biased stretch (basic and acidic residues) spans 282–299 (QEERLDKYPSSTGRDEKG). The span at 303 to 314 (YNLSNPNEQTGN) shows a compositional bias: polar residues. Residues 321–332 (SASDDGGEAAAS) are compositionally biased toward low complexity. The WRKY 2 DNA-binding region spans 375–440 (SEVDILDDGY…YEGKHDHDVP (66 aa)). Residues cysteine 406, cysteine 411, histidine 435, and histidine 437 each coordinate Zn(2+). Disordered stretches follow at residues 433–486 (GKHD…QHQN) and 520–557 (NQYGQRETKNETQNGDISSLNNSSYPYPPNMGRVQSGP). The segment covering 520 to 536 (NQYGQRETKNETQNGDI) has biased composition (polar residues).

The protein belongs to the WRKY group I family.

The protein resides in the nucleus. Transcription factor. Interacts specifically with the W box (5'-(T)TGAC[CT]-3'), a frequently occurring elicitor-responsive cis-acting element. The sequence is that of Probable WRKY transcription factor 20 (WRKY20) from Arabidopsis thaliana (Mouse-ear cress).